Here is a 471-residue protein sequence, read N- to C-terminus: Meiosis-specific with OB domain-containing protein (471 aa).

The segment at residues Ile167 to Arg272 is a DNA-binding region (OB).

The protein belongs to the MEIOB family. Component of a multiprotein complex with RPA2 and SPATA22. Interacts with SPATA22. Interacts with the complex BRME1:HSF2BP:BRCA2.

It localises to the cytoplasm. Its subcellular location is the nucleus. The protein resides in the chromosome. Functionally, single-stranded DNA-binding protein required for homologous recombination in meiosis I. Required for double strand breaks (DSBs) repair and crossover formation and promotion of faithful and complete synapsis. Not required for the initial loading of recombinases but required to maintain a proper number of RAD51 and DMC1 foci after the zygotene stage. May act by ensuring the stabilization of recombinases, which is required for successful homology search and meiotic recombination. Displays Single-stranded DNA 3'-5' exonuclease activity in vitro. The sequence is that of Meiosis-specific with OB domain-containing protein (MEIOB) from Macaca fascicularis (Crab-eating macaque).